Consider the following 294-residue polypeptide: tRNA pseudouridine synthase B (294 aa).

Aspartate 39 functions as the Nucleophile in the catalytic mechanism.

It belongs to the pseudouridine synthase TruB family. Type 1 subfamily.

The catalysed reaction is uridine(55) in tRNA = pseudouridine(55) in tRNA. Functionally, responsible for synthesis of pseudouridine from uracil-55 in the psi GC loop of transfer RNAs. The sequence is that of tRNA pseudouridine synthase B from Streptococcus pyogenes serotype M6 (strain ATCC BAA-946 / MGAS10394).